The primary structure comprises 334 residues: GTP 3',8-cyclase (334 aa).

Residues 13-239 (RFHRKFYYLR…KVKAANDGPA (227 aa)) form the Radical SAM core domain. Arg22 contributes to the GTP binding site. Cys29 and Cys33 together coordinate [4Fe-4S] cluster. S-adenosyl-L-methionine is bound at residue Tyr35. Residue Cys36 participates in [4Fe-4S] cluster binding. GTP is bound at residue Arg73. Gly77 is a binding site for S-adenosyl-L-methionine. Thr104 is a GTP binding site. Ser128 provides a ligand contact to S-adenosyl-L-methionine. Lys165 contributes to the GTP binding site. Met199 contacts S-adenosyl-L-methionine. 2 residues coordinate [4Fe-4S] cluster: Cys262 and Cys265. GTP is bound at residue 267–269 (RLR). Cys279 contacts [4Fe-4S] cluster.

Belongs to the radical SAM superfamily. MoaA family. In terms of assembly, monomer and homodimer. The cofactor is [4Fe-4S] cluster.

It catalyses the reaction GTP + AH2 + S-adenosyl-L-methionine = (8S)-3',8-cyclo-7,8-dihydroguanosine 5'-triphosphate + 5'-deoxyadenosine + L-methionine + A + H(+). It functions in the pathway cofactor biosynthesis; molybdopterin biosynthesis. Catalyzes the cyclization of GTP to (8S)-3',8-cyclo-7,8-dihydroguanosine 5'-triphosphate. In Vibrio vulnificus (strain YJ016), this protein is GTP 3',8-cyclase.